A 163-amino-acid polypeptide reads, in one-letter code: Cyanate hydratase (163 aa).

Catalysis depends on residues Arg103, Glu106, and Ser129.

The protein belongs to the cyanase family.

The enzyme catalyses cyanate + hydrogencarbonate + 3 H(+) = NH4(+) + 2 CO2. In terms of biological role, catalyzes the reaction of cyanate with bicarbonate to produce ammonia and carbon dioxide. The sequence is that of Cyanate hydratase from Paracoccidioides lutzii (strain ATCC MYA-826 / Pb01) (Paracoccidioides brasiliensis).